Here is a 252-residue protein sequence, read N- to C-terminus: PHD finger protein ALFIN-LIKE 7 (252 aa).

Residues 141-193 form a disordered region; the sequence is AKQSKDQSANHNSSRSKSSGGKPRHSESHTKASKMSPPPRKEDESGDEDEDDE. The segment covering 149–161 has biased composition (low complexity); it reads ANHNSSRSKSSGG. Ser176 is subject to Phosphoserine. Acidic residues predominate over residues 184–193; it reads ESGDEDEDDE. The PHD-type zinc finger occupies 195 to 247; sequence GAVCGACGDNYGGDEFWICCDACEKWFHGKCVKITPAKAEHIKHYKCPSCTTS.

The protein belongs to the Alfin family. As to quaternary structure, interacts with H3K4me3 and to a lesser extent with H3K4me2. In terms of tissue distribution, ubiquitously expressed.

The protein localises to the nucleus. Its function is as follows. Histone-binding component that specifically recognizes H3 tails trimethylated on 'Lys-4' (H3K4me3), which mark transcription start sites of virtually all active genes. The chain is PHD finger protein ALFIN-LIKE 7 (AL7) from Arabidopsis thaliana (Mouse-ear cress).